A 353-amino-acid polypeptide reads, in one-letter code: Photosystem II protein D1 (353 aa).

Threonine 2 bears the N-acetylthreonine mark. Position 2 is a phosphothreonine (threonine 2). 3 consecutive transmembrane segments (helical) span residues 29 to 46 (YIGW…TATS), 118 to 133 (HFLL…EWEL), and 142 to 156 (WIAV…AATA). Residue histidine 118 participates in chlorophyll a binding. Residue tyrosine 126 participates in pheophytin a binding. The [CaMn4O5] cluster site is built by aspartate 170 and glutamate 189. The chain crosses the membrane as a helical span at residues 197–218 (FHMLGVAGVFGGSLFSAMHGSL). Histidine 198 contributes to the chlorophyll a binding site. Residues histidine 215 and 264–265 (SF) each bind a quinone. Histidine 215 lines the Fe cation pocket. Residue histidine 272 participates in Fe cation binding. Residues 274-288 (FLAAWPVVGIWFTAL) form a helical membrane-spanning segment. Positions 332, 333, 342, and 344 each coordinate [CaMn4O5] cluster. A propeptide spanning residues 345 to 353 (AVEAPSTNG) is cleaved from the precursor.

The protein belongs to the reaction center PufL/M/PsbA/D family. PSII is composed of 1 copy each of membrane proteins PsbA, PsbB, PsbC, PsbD, PsbE, PsbF, PsbH, PsbI, PsbJ, PsbK, PsbL, PsbM, PsbT, PsbX, PsbY, PsbZ, Psb30/Ycf12, at least 3 peripheral proteins of the oxygen-evolving complex and a large number of cofactors. It forms dimeric complexes. The cofactor is The D1/D2 heterodimer binds P680, chlorophylls that are the primary electron donor of PSII, and subsequent electron acceptors. It shares a non-heme iron and each subunit binds pheophytin, quinone, additional chlorophylls, carotenoids and lipids. D1 provides most of the ligands for the Mn4-Ca-O5 cluster of the oxygen-evolving complex (OEC). There is also a Cl(-1) ion associated with D1 and D2, which is required for oxygen evolution. The PSII complex binds additional chlorophylls, carotenoids and specific lipids.. In terms of processing, tyr-161 forms a radical intermediate that is referred to as redox-active TyrZ, YZ or Y-Z. C-terminally processed by CTPA; processing is essential to allow assembly of the oxygen-evolving complex and thus photosynthetic growth.

The protein localises to the plastid. It is found in the chloroplast thylakoid membrane. It catalyses the reaction 2 a plastoquinone + 4 hnu + 2 H2O = 2 a plastoquinol + O2. In terms of biological role, photosystem II (PSII) is a light-driven water:plastoquinone oxidoreductase that uses light energy to abstract electrons from H(2)O, generating O(2) and a proton gradient subsequently used for ATP formation. It consists of a core antenna complex that captures photons, and an electron transfer chain that converts photonic excitation into a charge separation. The D1/D2 (PsbA/PsbD) reaction center heterodimer binds P680, the primary electron donor of PSII as well as several subsequent electron acceptors. In Lepidium virginicum (Virginia pepperweed), this protein is Photosystem II protein D1.